Reading from the N-terminus, the 1453-residue chain is Clustered mitochondria protein homolog (1453 aa).

A compositionally biased stretch (polar residues) spans Leu-78–Ser-101. A disordered region spans residues Leu-78–Ala-110. One can recognise a Clu domain in the interval Glu-439–Leu-690. Residues Pro-979–Asp-1015 form a disordered region. Residues Lys-995–Gln-1005 are compositionally biased toward basic residues. TPR repeat units lie at residues Ala-1235 to Tyr-1268 and Ala-1277 to Thr-1310.

This sequence belongs to the CLU family.

It is found in the cytoplasm. In terms of biological role, mRNA-binding protein involved in proper cytoplasmic distribution of mitochondria. This is Clustered mitochondria protein homolog from Brugia malayi (Filarial nematode worm).